Consider the following 120-residue polypeptide: UPF0344 protein LMOf2365_2298 (120 aa).

The next 4 membrane-spanning stretches (helical) occupy residues 3–23 (GYIH…ALLI), 33–53 (MLQM…IMMV), 62–82 (ILAI…EMLL), and 92–112 (GMFL…GFYL).

Belongs to the UPF0344 family.

Its subcellular location is the cell membrane. The polypeptide is UPF0344 protein LMOf2365_2298 (Listeria monocytogenes serotype 4b (strain F2365)).